The chain runs to 414 residues: Glucose-1-phosphate adenylyltransferase (414 aa).

Alpha-D-glucose 1-phosphate is bound by residues Y103, G168, 183 to 184 (EK), and S201.

This sequence belongs to the bacterial/plant glucose-1-phosphate adenylyltransferase family. As to quaternary structure, homotetramer.

The enzyme catalyses alpha-D-glucose 1-phosphate + ATP + H(+) = ADP-alpha-D-glucose + diphosphate. It functions in the pathway glycan biosynthesis; glycogen biosynthesis. In terms of biological role, involved in the biosynthesis of ADP-glucose, a building block required for the elongation reactions to produce glycogen. Catalyzes the reaction between ATP and alpha-D-glucose 1-phosphate (G1P) to produce pyrophosphate and ADP-Glc. In Thermus caldophilus, this protein is Glucose-1-phosphate adenylyltransferase.